We begin with the raw amino-acid sequence, 163 residues long: Regulatory protein RecX (163 aa).

A disordered region spans residues 1 to 21 (MSDAEDIPTGRKRRPREQTPV).

It belongs to the RecX family.

It localises to the cytoplasm. Modulates RecA activity. The chain is Regulatory protein RecX from Stenotrophomonas maltophilia (strain K279a).